The following is a 421-amino-acid chain: F-box/kelch-repeat protein At1g26930 (421 aa).

Residues 54–73 (TDSSEGEDNGSSSDSGTLIP) are disordered. Positions 70–117 (TLIPGMNRDDSLSCLIRCSRADYCSIASVNRSLRSLIRSGEIYRLRRL) constitute an F-box domain. Kelch repeat units lie at residues 114-167 (LRRL…LAVG), 169-212 (DLLV…SYGE), 213-260 (IAVL…FMDG), 261-312 (KFYV…MSAA), and 320-366 (AVVN…GLAF).

This Arabidopsis thaliana (Mouse-ear cress) protein is F-box/kelch-repeat protein At1g26930.